We begin with the raw amino-acid sequence, 668 residues long: Endoplasmic reticulum oxidoreductin-1 (668 aa).

Residues 1–22 (MKPASRLFYLSLFALWSPEAQC) form the signal peptide. Intrachain disulfides connect C79–C413, C89–C94, C150–C352, and C416–C419. The interval 116-142 (KLEGPRAKHPGKSVQKEEPKRPLQGKL) is disordered. FAD contacts are provided by R186, T188, W199, S282, and H285. N-linked (GlcNAc...) asparagine glycans are attached at residues N298 and N307. Residue R314 coordinates FAD. The N-linked (GlcNAc...) asparagine glycan is linked to N406. Catalysis depends on C416, which acts as the Nucleophile. The active site involves C419. N-linked (GlcNAc...) asparagine glycosylation is present at N443. Disordered stretches follow at residues 488–519 (VEES…DRAK) and 554–597 (GVTP…DPNF). The span at 494 to 509 (GQQPQSHEQIEGSENS) shows a compositional bias: polar residues. The segment covering 570–581 (DNNDDDDDDDEF) has biased composition (acidic residues).

This sequence belongs to the EROs family. As to quaternary structure, may function both as a monomer and a homodimer. FAD serves as cofactor.

It is found in the endoplasmic reticulum membrane. Its function is as follows. Essential oxidoreductase that oxidizes proteins in the endoplasmic reticulum to produce disulfide bonds. Acts by oxidizing directly pdi1 isomerase through a direct disulfide exchange. Does not act as a direct oxidant of folding substrate, but relies on pdi1 to transfer oxidizing equivalent. Does not oxidize all pdi related proteins, suggesting that it can discriminate between pdi1 and related proteins. Its reoxidation probably involves electron transfer to molecular oxygen via FAD. Acts independently of glutathione. May be responsible for a significant proportion of reactive oxygen species (ROS) in the cell, thereby being a source of oxidative stress. This Neurospora crassa (strain ATCC 24698 / 74-OR23-1A / CBS 708.71 / DSM 1257 / FGSC 987) protein is Endoplasmic reticulum oxidoreductin-1 (ero-1).